The chain runs to 245 residues: NAD-dependent protein deacetylase (245 aa).

The Deacetylase sirtuin-type domain maps to 1 to 245; sequence MIFVQQFEEV…EFVEGLSSRK (245 aa). NAD(+) contacts are provided by Ala26, Thr30, Phe37, Arg38, Gln105, Ile107, Asp108, and His123. Phe37 contributes to the nicotinamide binding site. 2 residues coordinate nicotinamide: Ile107 and Asp108. Residue His123 is the Proton acceptor of the active site. Cys131, Cys134, Cys151, and Cys154 together coordinate Zn(2+). NAD(+)-binding residues include Thr190, Ser191, Asn216, and Ile234.

Belongs to the sirtuin family. Class U subfamily. Zn(2+) serves as cofactor.

Its subcellular location is the cytoplasm. The catalysed reaction is N(6)-acetyl-L-lysyl-[protein] + NAD(+) + H2O = 2''-O-acetyl-ADP-D-ribose + nicotinamide + L-lysyl-[protein]. In terms of biological role, NAD-dependent protein deacetylase which modulates the activities of several enzymes which are inactive in their acetylated form. This Bacillus cereus (strain ZK / E33L) protein is NAD-dependent protein deacetylase.